Here is a 277-residue protein sequence, read N- to C-terminus: Cell death abnormality protein 2 (277 aa).

In terms of domain architecture, SH2 spans 14 to 112 (FYFPGMSRED…EASLLSAYKK (99 aa)). The 61-residue stretch at 113-173 (PIIEVVVGTF…PANYVQVQSG (61 aa)) folds into the SH3 1 domain. Residues 179-217 (RISKGTSQSSIGSSGNGAERFSSTSTSSENAEAHPTLPT) form a disordered region. The span at 182–206 (KGTSQSSIGSSGNGAERFSSTSTSS) shows a compositional bias: low complexity. The 62-residue stretch at 214–275 (TLPTTAKVTF…PFTYIRFNTA (62 aa)) folds into the SH3 2 domain.

The protein belongs to the CRK family. As to quaternary structure, interacts with ced-5 (via C-terminus which contains a candidate SH3-binding, proline-rich region). Forms a ternary complex with ced-5 and ced-12. Interacts (via SH-2 domain) with src-1 (when activated and phosphorylated at 'Tyr-416').

Its function is as follows. Required for cell migration and engulfment of cell corpses but not for programmed cell death/apoptosis. Also has a role in the migration of the 2 gonadal distal tip cells (DTCs). The chain is Cell death abnormality protein 2 from Caenorhabditis briggsae.